The primary structure comprises 110 residues: FMRFamide-like neuropeptides 11 (110 aa).

The signal sequence occupies residues 1 to 22 (MTQFSALALLLIVFVAASFAQS). Residues 23–29 (YDDVSAE) constitute a propeptide that is removed on maturation. 2 positions are modified to phenylalanine amide: phenylalanine 40 and phenylalanine 54. The tract at residues 60–85 (LDEEDFAPESPLQGKRNGAPQPFVRF) is disordered. Glutamine 72 is modified (glutamine amide). A Phenylalanine amide modification is found at phenylalanine 85. Residues 88 to 110 (SGQLDHMHDLLSTLQKLKFANNK) constitute a propeptide that is removed on maturation.

It belongs to the FARP (FMRFamide related peptide) family. In terms of tissue distribution, each flp gene is expressed in a distinct set of neurons. Flp-11 is expressed in the DD, VD and DVB motor neurons, the PVC and URX interneurons, and the AUA, BAG, DA, LUA, and SAB neurons. Also expressed in head muscle, socket or sheath cells and uterine cells. Expressed exclusively in PHC sensory neurons in males. Expressed in AVK and RIS interneurons.

It localises to the secreted. In terms of biological role, FMRFamides and FMRFamide-like peptides are neuropeptides. Induces sleep-like quiescence behavior following release from RIS interneuron. Helps to sustain locomotion stop after gamma-aminobutyric acid (GABA) induces fast slowing response. Inhibits the late-stage body bend swimming frequency in animals through several receptors including frpr-3, npr-4 and npr-22. Functionally, potent inhibitor of the activity of the dissected pharyngeal myogenic muscle system. Acts as a ligand for the npr-22 receptor in vitro. Its function is as follows. Acts as a ligand for the npr-22 receptor in vitro. The protein is FMRFamide-like neuropeptides 11 of Caenorhabditis elegans.